The chain runs to 521 residues: Pentatricopeptide repeat-containing protein At4g26680, mitochondrial (521 aa).

A mitochondrion-targeting transit peptide spans 1–38 (MIRISIGVNRRLRYQFSSFAGYSGSENPRLFKTLGAAN). PPR repeat units follow at residues 167–201 (TPRVFDSLFKTFAHLKKFRNATDTFMQMKDYGFLP), 202–236 (TVESCNAYMSSLLGQGRVDIALRFYREMRRCKISP), 237–271 (NPYTLNMVMSGYCRSGKLDKGIELLQDMERLGFRA), 272–306 (TDVSYNTLIAGHCEKGLLSSALKLKNMMGKSGLQP), 307–341 (NVVTFNTLIHGFCRAMKLQEASKVFGEMKAVNVAP), 342–376 (NTVTYNTLINGYSQQGDHEMAFRFYEDMVCNGIQR), 377–411 (DILTYNALIFGLCKQAKTRKAAQFVKELDKENLVP), 412–446 (NSSTFSALIMGQCVRKNADRGFELYKSMIRSGCHP), 447–481 (NEQTFNMLVSAFCRNEDFDGASQVLREMVRRSIPL), and 482–516 (DSRTVHQVCNGLKHQGKDQLVKKLLQEMEGKKFLQ).

The protein belongs to the PPR family. P subfamily.

It localises to the mitochondrion. In Arabidopsis thaliana (Mouse-ear cress), this protein is Pentatricopeptide repeat-containing protein At4g26680, mitochondrial.